The following is a 248-amino-acid chain: 4-hydroxy-tetrahydrodipicolinate reductase (248 aa).

Residues 9–14 (GAKGRV), 77–79 (GTT), and 104–107 (APNF) contribute to the NAD(+) site. Residue histidine 134 is the Proton donor/acceptor of the active site. Position 135 (histidine 135) interacts with (S)-2,3,4,5-tetrahydrodipicolinate. The active-site Proton donor is lysine 138. Position 144–145 (144–145 (GT)) interacts with (S)-2,3,4,5-tetrahydrodipicolinate.

The protein belongs to the DapB family.

The protein localises to the cytoplasm. It catalyses the reaction (S)-2,3,4,5-tetrahydrodipicolinate + NAD(+) + H2O = (2S,4S)-4-hydroxy-2,3,4,5-tetrahydrodipicolinate + NADH + H(+). The catalysed reaction is (S)-2,3,4,5-tetrahydrodipicolinate + NADP(+) + H2O = (2S,4S)-4-hydroxy-2,3,4,5-tetrahydrodipicolinate + NADPH + H(+). It functions in the pathway amino-acid biosynthesis; L-lysine biosynthesis via DAP pathway; (S)-tetrahydrodipicolinate from L-aspartate: step 4/4. Catalyzes the conversion of 4-hydroxy-tetrahydrodipicolinate (HTPA) to tetrahydrodipicolinate. This is 4-hydroxy-tetrahydrodipicolinate reductase from Corynebacterium efficiens (strain DSM 44549 / YS-314 / AJ 12310 / JCM 11189 / NBRC 100395).